The sequence spans 179 residues: Large ribosomal subunit protein uL5 (179 aa).

The protein belongs to the universal ribosomal protein uL5 family. Part of the 50S ribosomal subunit; part of the 5S rRNA/L5/L18/L25 subcomplex. Contacts the 5S rRNA and the P site tRNA. Forms a bridge to the 30S subunit in the 70S ribosome.

Its function is as follows. This is one of the proteins that bind and probably mediate the attachment of the 5S RNA into the large ribosomal subunit, where it forms part of the central protuberance. In the 70S ribosome it contacts protein S13 of the 30S subunit (bridge B1b), connecting the 2 subunits; this bridge is implicated in subunit movement. Contacts the P site tRNA; the 5S rRNA and some of its associated proteins might help stabilize positioning of ribosome-bound tRNAs. The protein is Large ribosomal subunit protein uL5 of Pseudomonas fluorescens (strain SBW25).